A 121-amino-acid polypeptide reads, in one-letter code: B-box domain protein 31 (121 aa).

A B box-type; atypical zinc finger spans residues Ser26–Leu72. The short motif at Pro117–Leu121 is the PFVFL element.

Highly expressed in shoot apical meristems and in vascular tissues of leaves. Also detected in petioles.

Functionally, developmental regulator acting by forming heterodimeric complexes, that sequester CO and CO-like (COL) proteins into non-functional complexes. Involved in the CO-mediated long-day flowering-promotion pathway. Engages CO and the transcriptional repressor TPL in a tripartite complex. In Arabidopsis thaliana (Mouse-ear cress), this protein is B-box domain protein 31.